The primary structure comprises 153 residues: D-aminoacyl-tRNA deacylase (153 aa).

Positions 137–138 (GP) match the Gly-cisPro motif, important for rejection of L-amino acids motif.

The protein belongs to the DTD family. In terms of assembly, homodimer.

Its subcellular location is the cytoplasm. The catalysed reaction is glycyl-tRNA(Ala) + H2O = tRNA(Ala) + glycine + H(+). It carries out the reaction a D-aminoacyl-tRNA + H2O = a tRNA + a D-alpha-amino acid + H(+). An aminoacyl-tRNA editing enzyme that deacylates mischarged D-aminoacyl-tRNAs. Also deacylates mischarged glycyl-tRNA(Ala), protecting cells against glycine mischarging by AlaRS. Acts via tRNA-based rather than protein-based catalysis; rejects L-amino acids rather than detecting D-amino acids in the active site. By recycling D-aminoacyl-tRNA to D-amino acids and free tRNA molecules, this enzyme counteracts the toxicity associated with the formation of D-aminoacyl-tRNA entities in vivo and helps enforce protein L-homochirality. The polypeptide is D-aminoacyl-tRNA deacylase (Herpetosiphon aurantiacus (strain ATCC 23779 / DSM 785 / 114-95)).